The following is a 163-amino-acid chain: ADP-ribosylation factor-like protein 2-binding protein (163 aa).

The protein belongs to the ARL2BP family. In terms of assembly, found in a complex with ARL2BP, ARL2 and SLC25A6. Found in a complex with ARL2, ARL2BP and SLC25A4. Interacts with STAT2, STAT3 and STAT4. Interacts with GTP-bound ARL2 and ARL3; the complex ARL2-ARL2BP as well as ARL2BP alone, binds to SLC25A4. Interaction with ARL2 may be required for targeting to cilia basal body. Interacts with STAT3; interaction is enhanced with ARL2. Expressed in retina pigment epithelial cells (at protein level). Widely expressed.

It localises to the cytoplasm. It is found in the mitochondrion intermembrane space. The protein localises to the cytoskeleton. Its subcellular location is the microtubule organizing center. The protein resides in the centrosome. It localises to the nucleus. It is found in the spindle. The protein localises to the cilium basal body. Together with ARL2, plays a role in the nuclear translocation, retention and transcriptional activity of STAT3. May play a role as an effector of ARL2. The sequence is that of ADP-ribosylation factor-like protein 2-binding protein (ARL2BP) from Homo sapiens (Human).